Consider the following 397-residue polypeptide: Acetyl-CoA acetyltransferase, cytosolic (397 aa).

Position 1 is an N-acetylmethionine (Met-1). Cys-92 functions as the Acyl-thioester intermediate in the catalytic mechanism. At Lys-200 the chain carries N6-acetyllysine. Residues Arg-223 and Ser-226 each contribute to the CoA site. N6-acetyllysine is present on residues Lys-233 and Lys-235. Ser-252 contributes to the CoA binding site. The active-site Proton donor/acceptor is Cys-383.

It belongs to the thiolase-like superfamily. Thiolase family. Homotetramer.

It localises to the cytoplasm. The protein resides in the cytosol. It carries out the reaction 2 acetyl-CoA = acetoacetyl-CoA + CoA. The protein operates within lipid metabolism; fatty acid metabolism. Involved in the biosynthetic pathway of cholesterol. This is Acetyl-CoA acetyltransferase, cytosolic (ACAT2) from Homo sapiens (Human).